Here is a 116-residue protein sequence, read N- to C-terminus: Peptidyl-tRNA hydrolase (116 aa).

It belongs to the PTH2 family.

It localises to the cytoplasm. The enzyme catalyses an N-acyl-L-alpha-aminoacyl-tRNA + H2O = an N-acyl-L-amino acid + a tRNA + H(+). Its function is as follows. The natural substrate for this enzyme may be peptidyl-tRNAs which drop off the ribosome during protein synthesis. The polypeptide is Peptidyl-tRNA hydrolase (Methanopyrus kandleri (strain AV19 / DSM 6324 / JCM 9639 / NBRC 100938)).